The primary structure comprises 67 residues: Beta-defensin 110 (67 aa).

A signal peptide spans methionine 1–alanine 19. 3 disulfide bridges follow: cysteine 35–cysteine 63, cysteine 42–cysteine 56, and cysteine 46–cysteine 64.

The protein belongs to the beta-defensin family.

Its subcellular location is the secreted. Its function is as follows. Has antibacterial activity. This is Beta-defensin 110 (DEFB110) from Pan troglodytes (Chimpanzee).